The primary structure comprises 547 residues: uncharacterized protein (547 aa).

The Cytoplasmic segment spans residues Met1–Arg19. The chain crosses the membrane as a helical span at residues Pro20–Ser40. Topologically, residues Ser41–Thr64 are vacuolar. The helical transmembrane segment at Phe65–Ile85 threads the bilayer. At Asn86–Phe89 the chain is on the cytoplasmic side. The helical transmembrane segment at Leu90 to Ile110 threads the bilayer. Topologically, residues Gly111–Ala139 are vacuolar. The chain crosses the membrane as a helical span at residues Tyr140 to Phe160. Over Asn161 to Gln340 the chain is Cytoplasmic. A Phosphoserine modification is found at Ser225. The disordered stretch occupies residues Pro237–Asp271. Polar residues predominate over residues Arg242–Gln253. A helical transmembrane segment spans residues Leu341–Gly361. Topologically, residues Glu362–Asn394 are vacuolar. The chain crosses the membrane as a helical span at residues Phe395 to Tyr415. Topologically, residues Leu416 to Ser523 are cytoplasmic. A helical membrane pass occupies residues Phe524–Thr544. Residues Val545–Ile547 are Vacuolar-facing.

It localises to the vacuole membrane. This is an uncharacterized protein from Saccharomyces cerevisiae (strain ATCC 204508 / S288c) (Baker's yeast).